We begin with the raw amino-acid sequence, 297 residues long: MRDRTHELRQGDDSSDDEDKERVALVVHPGTARLGSPDDEFFQKVRTIRQTIVKLENKVRELEKQQVTILATPLPEESMKQDLQNLRDEIKQLGRDIRAQLKAIEPQKEEADENYNSVNTRMRKTQHGVLSQQFVELINKCNLMQSEYREKNVERIRRQLKITNAGMVSDKELEQMLDSGQSEVFVSNILKDTQVTRQALNEISARHSEIQQLERSIRELHEIFTFLATEVEMQGEMINRIEKNILSSADYVERGQEHVKVALENQKKARKKKVFIAICLSITVLILVVIIVISTLV.

The segment covering M1 to D12 has biased composition (basic and acidic residues). The interval M1 to E21 is disordered. Topologically, residues M1 to F275 are cytoplasmic. S14 and S15 each carry phosphoserine. T31 bears the Phosphothreonine mark. S36, S117, S208, and S248 each carry phosphoserine. Residues Q43–T163 adopt a coiled-coil conformation. The 63-residue stretch at L200–A262 folds into the t-SNARE coiled-coil homology domain. Residues I276–L296 traverse the membrane as a helical; Anchor for type IV membrane protein segment. V297 is a topological domain (extracellular).

It belongs to the syntaxin family. In terms of assembly, component of the SNARE complex composed of STX4, SNAP23 and VAMP7 that interacts with SYT7 during lysosomal exocytosis. Found in a complex with VAMP8 and SNAP23. Detected in a complex with SNAP23 and STXBP4. Interacts with VAMP2. Interacts with SNAP23 and SNAPIN. Interacts with LLGL1. Interacts (via C-terminus) with CENPF. Interacts with DOC2B. Interacts with STXBP6. Interacts with STXBP3; excludes interaction with DOC2B and SNAP25. Interacts with STXBP4; excludes interaction with VAMP2. Interacts with STXBP5L.

It is found in the cell membrane. It localises to the cell projection. The protein resides in the neuron projection. The protein localises to the stereocilium. Plasma membrane t-SNARE that mediates docking of transport vesicles. Necessary for the translocation of SLC2A4 from intracellular vesicles to the plasma membrane. In neurons, recruited at neurite tips to membrane domains rich in the phospholipid 1-oleoyl-2-palmitoyl-PC (OPPC) which promotes neurite tip surface expression of the dopamine transporter SLC6A3/DAT by facilitating fusion of SLC6A3-containing transport vesicles with the plasma membrane. Together with STXB3 and VAMP2, may also play a role in docking/fusion of intracellular GLUT4-containing vesicles with the cell surface in adipocytes and in docking of synaptic vesicles at presynaptic active zones. Required for normal hearing. This chain is Syntaxin-4 (STX4), found in Bos taurus (Bovine).